The primary structure comprises 130 residues: MRHYEIVFMVHPDQSEQVPGMIERYTATITGAQGTIHRLEDWGRRQLAYPINKLHKAHYVLLNVEAPQEAIDELETNFRFNDAVIRSMVMRVKHAVTEASPMVKAKDERRERREDFAEAGDDVEAGDSEE.

A disordered region spans residues 100–130 (SPMVKAKDERRERREDFAEAGDDVEAGDSEE). A compositionally biased stretch (basic and acidic residues) spans 104–116 (KAKDERRERREDF). Acidic residues predominate over residues 117–130 (AEAGDDVEAGDSEE).

This sequence belongs to the bacterial ribosomal protein bS6 family.

In terms of biological role, binds together with bS18 to 16S ribosomal RNA. The protein is Small ribosomal subunit protein bS6 of Pectobacterium atrosepticum (strain SCRI 1043 / ATCC BAA-672) (Erwinia carotovora subsp. atroseptica).